Consider the following 2365-residue polypeptide: TRIO and F-actin-binding protein (2365 aa).

4 disordered regions span residues 48–1106, 1168–1554, 1593–1667, and 1679–1751; these read VPYC…HEPL, HRDA…SERR, LPRK…WPKI, and AGLE…TSWR. A compositionally biased stretch (low complexity) spans 132–151; that stretch reads SDPTSSPDSATPDDTSNSSS. Position 221 is a phosphothreonine (His221). 13 stretches are compositionally biased toward polar residues: residues 239-271, 291-375, 403-422, 429-471, 478-520, 527-569, 576-618, 625-650, 661-674, 683-701, 709-722, 745-785, and 807-837; these read TLTQ…QAAS, RASS…TPQR, RTSC…SPNR, RTSC…SPRT, SSPN…NPRT, RASS…TSCA, and IRAT…PKTS. The segment at 324–348 is essentiel for its aggregation; sequence STQEDTPRASSTQWNTPRASSPSRS. Gln457 carries the phosphothreonine modification. Over residues 839–854 the composition is skewed to basic and acidic residues; the sequence is TKRDNLRPTCTQRDRT. Composition is skewed to polar residues over residues 855 to 898, 913 to 927, and 945 to 994; these read QSFS…SSPH, PTQS…PSRS, and DRPQ…TSSP. The segment covering 1045–1056 has biased composition (basic and acidic residues); that stretch reads RAPESEPPHHEP. Positions 1195–1206 are enriched in polar residues; sequence SMESLAPSTDSL. 2 stretches are compositionally biased toward basic and acidic residues: residues 1260-1270 and 1303-1319; these read ETRHNLEREEY and GRAE…RKSE. The segment covering 1332-1349 has biased composition (low complexity); the sequence is SQQPSQGQSQLLRRQSSP. Composition is skewed to basic and acidic residues over residues 1378 to 1387 and 1402 to 1411; these read SPEKRPEGDR and TPERELRTQR. Gly residues predominate over residues 1452-1461; sequence GGLGPGGWWG. A compositionally biased stretch (basic and acidic residues) spans 1494–1508; the sequence is WEEKPTHELPRELGK. Residues 1524-1534 are compositionally biased toward polar residues; the sequence is ESSQSWHSGTP. The segment covering 1594–1606 has biased composition (basic and acidic residues); sequence PRKDPAGHRDDLA. The span at 1645-1664 shows a compositional bias: polar residues; that stretch reads ALQSQSPVQLPSPACTSTQW. The segment covering 1696–1705 has biased composition (low complexity); sequence PSLPELQFQP. Basic and acidic residues predominate over residues 1724–1735; it reads KQADSADKRPAE. The PH domain maps to 1778–1887; it reads LNFKKGWMSI…WIEALRKTVR (110 aa). Ser1796 bears the Phosphoserine mark. Disordered stretches follow at residues 1889-2017 and 2174-2194; these read TSAP…LTED and LSKT…HQSD. Arg1930 bears the Omega-N-methylarginine mark. Phosphoserine occurs at positions 1949 and 1955. The span at 1965–1997 shows a compositional bias: basic and acidic residues; the sequence is TPDRLAKQEELERDLAQRSEERRKWFEATDSRT. Coiled coils occupy residues 2062–2247 and 2281–2361; these read SDGH…NQEL and ELEV…SMRN.

As to quaternary structure, isoform 1 forms aggregates. Isoform 1 binds to TRIO and F-actin. Isoform 1 may also interact with myosin II. Interacts with HECTD3. Interacts with PJVK. Interacts with TERF1; mediates TERF1 localization to the centrosome. Ubiquitinated by HECTD3, leading to its degradation by the proteasome. In terms of processing, phosphorylation at Thr-457 by PLK1 ensures mitotic progression and is essential for accurate chromosome segregation. Phosphorylation at residues Thr-221 and Thr-457 by kinase NEK2A and PLK1 coordinates TERF1 translocation from telomere to spindle pole. Widely expressed. Highly expressed in heart and placenta. As to expression, expressed in fetal brain, retina and cochlea but is not detectable in the other tissues.

Its subcellular location is the nucleus. The protein resides in the cytoplasm. It localises to the cytoskeleton. It is found in the microtubule organizing center. The protein localises to the centrosome. Its subcellular location is the midbody. The protein resides in the chromosome. It localises to the telomere. Functionally, regulates actin cytoskeletal organization, cell spreading and cell contraction by directly binding and stabilizing filamentous F-actin and prevents its depolymerization. May also serve as a linker protein to recruit proteins required for F-actin formation and turnover. Essential for correct mitotic progression. Its function is as follows. Plays a pivotal role in the formation of stereocilia rootlets. The polypeptide is TRIO and F-actin-binding protein (TRIOBP) (Homo sapiens (Human)).